A 379-amino-acid polypeptide reads, in one-letter code: Homoserine O-succinyltransferase (379 aa).

Residues Asn48–Met357 enclose the AB hydrolase-1 domain. Residue Ser154 is the Nucleophile of the active site. Position 224 (Arg224) interacts with substrate. Residues Asp319 and His352 contribute to the active site. Substrate is bound at residue Asp353.

It belongs to the AB hydrolase superfamily. MetX family. As to quaternary structure, homodimer.

Its subcellular location is the cytoplasm. The catalysed reaction is L-homoserine + succinyl-CoA = O-succinyl-L-homoserine + CoA. It functions in the pathway amino-acid biosynthesis; L-methionine biosynthesis via de novo pathway; O-succinyl-L-homoserine from L-homoserine: step 1/1. Its activity is regulated as follows. Activity increases in the presence of MetW. Its function is as follows. Transfers a succinyl group from succinyl-CoA to L-homoserine, forming succinyl-L-homoserine. In Neisseria gonorrhoeae, this protein is Homoserine O-succinyltransferase.